The sequence spans 263 residues: uncharacterized protein (263 aa).

This is an uncharacterized protein from Archaeoglobus fulgidus (strain ATCC 49558 / DSM 4304 / JCM 9628 / NBRC 100126 / VC-16).